Reading from the N-terminus, the 238-residue chain is Protein-lysine N-methyltransferase efm4 (238 aa).

This sequence belongs to the class I-like SAM-binding methyltransferase superfamily. EFM4 family.

The protein localises to the cytoplasm. Its subcellular location is the nucleus. In terms of biological role, S-adenosyl-L-methionine-dependent protein-lysine N-methyltransferase that mono- and dimethylates elongation factor 1-alpha at 'Lys-316'. May play a role in intracellular transport. The polypeptide is Protein-lysine N-methyltransferase efm4 (Schizosaccharomyces pombe (strain 972 / ATCC 24843) (Fission yeast)).